A 315-amino-acid polypeptide reads, in one-letter code: ATP synthase gamma chain (315 aa).

This sequence belongs to the ATPase gamma chain family. F-type ATPases have 2 components, CF(1) - the catalytic core - and CF(0) - the membrane proton channel. CF(1) has five subunits: alpha(3), beta(3), gamma(1), delta(1), epsilon(1). CF(0) has three main subunits: a, b and c.

The protein resides in the cell membrane. Produces ATP from ADP in the presence of a proton gradient across the membrane. The gamma chain is believed to be important in regulating ATPase activity and the flow of protons through the CF(0) complex. This is ATP synthase gamma chain from Latilactobacillus sakei subsp. sakei (strain 23K) (Lactobacillus sakei subsp. sakei).